A 58-amino-acid chain; its full sequence is Ribosome modulation factor (58 aa).

Residues 1-28 (MKRQKRDRFERAHTQGFKAGLHGRSKDN) form a disordered region.

This sequence belongs to the ribosome modulation factor family.

It localises to the cytoplasm. In terms of biological role, during stationary phase, converts 70S ribosomes to an inactive dimeric form (100S ribosomes). This chain is Ribosome modulation factor, found in Idiomarina loihiensis (strain ATCC BAA-735 / DSM 15497 / L2-TR).